A 355-amino-acid polypeptide reads, in one-letter code: Neutral protease 2 homolog AFUB_100460 (355 aa).

An N-terminal signal peptide occupies residues 1–19 (MKITALASAILAVAQGALA). A propeptide spanning residues 20–172 (LPARAPALDI…PASIKPLDRR (153 aa)) is cleaved from the precursor. Disulfide bonds link Cys-179/Cys-251 and Cys-258/Cys-276. Residue His-300 participates in Zn(2+) binding. The active site involves Glu-301. The Zn(2+) site is built by His-304 and Asp-315.

This sequence belongs to the peptidase M35 family. The cofactor is Zn(2+).

It localises to the secreted. It carries out the reaction Preferential cleavage of bonds with hydrophobic residues in P1'. Also 3-Asn-|-Gln-4 and 8-Gly-|-Ser-9 bonds in insulin B chain.. In terms of biological role, secreted metalloproteinase that allows assimilation of proteinaceous substrates. Shows high activities on basic nuclear substrates such as histone and protamine. May be involved in virulence. This chain is Neutral protease 2 homolog AFUB_100460, found in Aspergillus fumigatus (strain CBS 144.89 / FGSC A1163 / CEA10) (Neosartorya fumigata).